We begin with the raw amino-acid sequence, 404 residues long: Ubiquitin-like modifier-activating enzyme 5 (404 aa).

Phosphoserine is present on Ser-45. Positions 83, 104, 127, 150, and 184 each coordinate ATP. Residues Cys-226 and Cys-229 each coordinate Zn(2+). The active-site Glycyl thioester intermediate is Cys-250. Positions 303 and 308 each coordinate Zn(2+). The UFM1-interacting sequence (UIS) signature appears at 334–346 (IIHEDNEWGIELV). A linker region spans residues 347 to 377 (SEVSEEELKNFSGPVPDLPEGITVAYTIPKK). A phosphoserine mark is found at Ser-358 and Ser-393. Residues 389-404 (DSGESLEDLMAKMKNM) carry the UFC1-binding sequence (UFC) motif.

Belongs to the ubiquitin-activating E1 family. UBA5 subfamily. In terms of assembly, homodimer; homodimerization is required for UFM1 activation. Interacts (via UIS motif) with UFM1; binds UFM1 via a trans-binding mechanism in which UFM1 interacts with distinct sites in both subunits of the UBA5 homodimer. Interacts (via C-terminus) with UFC1. Interacts (via UIS motif) with GABARAPL2 and, with lower affinity, with GABARAP and GABARAPL1. In terms of tissue distribution, widely expressed.

It localises to the cytoplasm. It is found in the nucleus. The protein resides in the endoplasmic reticulum membrane. The protein localises to the golgi apparatus. Functionally, E1-like enzyme which specifically catalyzes the first step in ufmylation. Activates UFM1 by first adenylating its C-terminal glycine residue with ATP, and thereafter linking this residue to the side chain of a cysteine residue in E1, yielding a UFM1-E1 thioester and free AMP. Activates UFM1 via a trans-binding mechanism, in which UFM1 interacts with distinct sites in both subunits of the UBA5 homodimer. Trans-binding also promotes stabilization of the UBA5 homodimer, and enhances ATP-binding. Transfer of UFM1 from UBA5 to the E2-like enzyme UFC1 also takes place using a trans mechanism. Ufmylation plays a key role in various processes, such as ribosome recycling, response to DNA damage, interferon response or reticulophagy (also called ER-phagy). Ufmylation is essential for erythroid differentiation of both megakaryocytes and erythrocytes. The protein is Ubiquitin-like modifier-activating enzyme 5 of Homo sapiens (Human).